The sequence spans 207 residues: Guanylate kinase (207 aa).

The Guanylate kinase-like domain maps to 4 to 184; it reads GTLYIVSAPS…ALLDLKTIIR (181 aa). 11–18 contacts ATP; the sequence is APSGAGKS.

Belongs to the guanylate kinase family.

Its subcellular location is the cytoplasm. It carries out the reaction GMP + ATP = GDP + ADP. Functionally, essential for recycling GMP and indirectly, cGMP. The polypeptide is Guanylate kinase (Sodalis glossinidius (strain morsitans)).